The sequence spans 325 residues: Melanocortin receptor 5 (325 aa).

The Extracellular portion of the chain corresponds to 1–37; it reads MNSSFHLHFLDLNLNATEGNLSGPNVKNKSSPCEDMG. Residues N2, N15, N20, and N28 are each glycosylated (N-linked (GlcNAc...) asparagine). A helical transmembrane segment spans residues 38-61; the sequence is IAVEVFLTLGVISLLENILVIGAI. At 62-73 the chain is on the cytoplasmic side; sequence VKNKNLHSPMYF. Residues 74-97 traverse the membrane as a helical segment; the sequence is FVCSLAVADMLVSMSSAWETITIY. At 98–114 the chain is on the extracellular side; the sequence is LLNNKHLVIADAFVRHI. Residues 115-138 traverse the membrane as a helical segment; the sequence is DNVFDSMICISVVASMCSLLAIAV. Residues 139–155 lie on the Cytoplasmic side of the membrane; sequence DRYVTIFYALRYHHIMT. Residues 156–179 traverse the membrane as a helical segment; that stretch reads ARRSGAIIAGIWAFCTGCGIVFIL. Topologically, residues 180–186 are extracellular; sequence YSESTYV. Residues 187–211 traverse the membrane as a helical segment; that stretch reads ILCLISMFFAMLFLLVSLYIHMFLL. At 212-239 the chain is on the cytoplasmic side; that stretch reads ARTHVKRIAALPRASSARQRTSMQGAVT. A helical membrane pass occupies residues 240 to 265; it reads VTMLLGVFTVCWAPFFLHLTLMLSCP. The Extracellular segment spans residues 266–273; it reads QNLYCSCF. Residues 274-297 form a helical membrane-spanning segment; it reads MSHFNMYLILIMCNSVMDPLIYAF. The Cytoplasmic portion of the chain corresponds to 298–325; that stretch reads RSQEMRKTFKEIICCRGFRIACSFPRRD. 2 S-palmitoyl cysteine lipidation sites follow: C311 and C312.

This sequence belongs to the G-protein coupled receptor 1 family.

It localises to the cell membrane. Its function is as follows. Receptor for MSH (alpha, beta and gamma) and ACTH. The activity of this receptor is mediated by G proteins which activate adenylate cyclase. This receptor is a possible mediator of the immunomodulation properties of melanocortins. This Pan troglodytes (Chimpanzee) protein is Melanocortin receptor 5 (MC5R).